A 406-amino-acid polypeptide reads, in one-letter code: tRNA-specific 2-thiouridylase MnmA (406 aa).

ATP is bound by residues 42 to 49 (GLSGGVDS) and Leu68. The Nucleophile role is filled by Cys129. The cysteines at positions 129 and 237 are disulfide-linked. Gly154 is a binding site for ATP. Residues 187 to 189 (KDQ) form an interaction with tRNA region. The Cysteine persulfide intermediate role is filled by Cys237. Residues 342–343 (RY) form an interaction with tRNA region.

This sequence belongs to the MnmA/TRMU family.

Its subcellular location is the cytoplasm. The enzyme catalyses S-sulfanyl-L-cysteinyl-[protein] + uridine(34) in tRNA + AH2 + ATP = 2-thiouridine(34) in tRNA + L-cysteinyl-[protein] + A + AMP + diphosphate + H(+). Its function is as follows. Catalyzes the 2-thiolation of uridine at the wobble position (U34) of tRNA, leading to the formation of s(2)U34. This is tRNA-specific 2-thiouridylase MnmA from Prochlorococcus marinus (strain MIT 9211).